The chain runs to 346 residues: Annexin A1 (346 aa).

Position 5 is a phosphoserine; by TRPM7 (serine 5). An Isoglutamyl lysine isopeptide (Gln-Lys) (interchain with K-?) cross-link involves residue glutamine 19. Tyrosine 21 is modified (phosphotyrosine; by EGFR). A Phosphoserine; by PKC modification is found at serine 27. Residues serine 34 and serine 37 each carry the phosphoserine modification. Annexin repeat units follow at residues 42-113 (FDAS…ALLK), 114-185 (TPAQ…SLAK), 197-269 (DLAD…AIVK), and 273-344 (STPA…ALCG). An N6-acetyllysine modification is found at lysine 58. Ca(2+) contacts are provided by glycine 59, valine 60, glutamate 62, lysine 97, leucine 100, glutamate 105, methionine 127, glycine 129, glycine 131, threonine 132, and glutamate 134. Threonine 136 bears the Phosphothreonine mark. Ca(2+) contacts are provided by aspartate 171, glycine 210, and arginine 213. Lysine 214 participates in a covalent cross-link: Glycyl lysine isopeptide (Lys-Gly) (interchain with G-Cter in SUMO1); alternate. A Glycyl lysine isopeptide (Lys-Gly) (interchain with G-Cter in SUMO2); alternate cross-link involves residue lysine 214. Glycine 215 lines the Ca(2+) pocket. An N6-acetyllysine modification is found at lysine 239. Ca(2+) is bound by residues aspartate 253, glutamate 255, and leucine 256. Residue lysine 257 forms a Glycyl lysine isopeptide (Lys-Gly) (interchain with G-Cter in SUMO1) linkage. Ca(2+) contacts are provided by glutamate 261, methionine 286, glycine 288, and glycine 290. Lysine 312 bears the N6-acetyllysine mark. Cysteines 324 and 343 form a disulfide. The Ca(2+) site is built by leucine 328, glutamate 330, and threonine 331. Lysine 332 is covalently cross-linked (Glycyl lysine isopeptide (Lys-Gly) (interchain with G-Cter in SUMO1)). Residue glutamate 336 participates in Ca(2+) binding.

It belongs to the annexin family. As to quaternary structure, homodimer; non-covalently linked. Homodimer; linked by transglutamylation. Homodimers linked by transglutamylation are observed in placenta, but not in other tissues. Interacts with S100A11. Heterotetramer, formed by two molecules each of S100A11 and ANXA1. Interacts with DYSF. Interacts with EGFR. In terms of processing, phosphorylated by protein kinase C, EGFR and TRPM7. Phosphorylated in response to EGF treatment. Post-translationally, sumoylated. Proteolytically cleaved by cathepsin CTSG to release the active N-terminal peptide Ac2-26.

It is found in the nucleus. The protein localises to the cytoplasm. The protein resides in the cell projection. It localises to the cilium. Its subcellular location is the basolateral cell membrane. It is found in the lateral cell membrane. The protein localises to the cell membrane. The protein resides in the apical cell membrane. It localises to the membrane. Its subcellular location is the endosome membrane. It is found in the secreted. The protein localises to the extracellular space. The protein resides in the early endosome. It localises to the cytoplasmic vesicle membrane. Its subcellular location is the extracellular exosome. It is found in the cytoplasmic vesicle. The protein localises to the secretory vesicle lumen. The protein resides in the phagocytic cup. Functionally, plays important roles in the innate immune response as effector of glucocorticoid-mediated responses and regulator of the inflammatory process. Has anti-inflammatory activity. Plays a role in glucocorticoid-mediated down-regulation of the early phase of the inflammatory response. Contributes to the adaptive immune response by enhancing signaling cascades that are triggered by T-cell activation, regulates differentiation and proliferation of activated T-cells. Promotes the differentiation of T-cells into Th1 cells and negatively regulates differentiation into Th2 cells. Has no effect on unstimulated T-cells. Negatively regulates hormone exocytosis via activation of the formyl peptide receptors and reorganization of the actin cytoskeleton. Has high affinity for Ca(2+) and can bind up to eight Ca(2+) ions. Displays Ca(2+)-dependent binding to phospholipid membranes. Plays a role in the formation of phagocytic cups and phagosomes. Plays a role in phagocytosis by mediating the Ca(2+)-dependent interaction between phagosomes and the actin cytoskeleton. Its function is as follows. Functions at least in part by activating the formyl peptide receptors and downstream signaling cascades. Promotes chemotaxis of granulocytes and monocytes via activation of the formyl peptide receptors. Promotes rearrangement of the actin cytoskeleton, cell polarization and cell migration. Promotes resolution of inflammation and wound healing. Acts via neutrophil N-formyl peptide receptors to enhance the release of CXCL2. This chain is Annexin A1 (ANXA1), found in Cavia cutleri (Guinea pig).